Reading from the N-terminus, the 89-residue chain is Small ribosomal subunit protein uS15 (89 aa).

The span at 1–21 shows a compositional bias: basic and acidic residues; the sequence is MSVDAETKTKIIKDNARDKND. A disordered region spans residues 1-26; it reads MSVDAETKTKIIKDNARDKNDTGSPE.

It belongs to the universal ribosomal protein uS15 family. In terms of assembly, part of the 30S ribosomal subunit. Forms a bridge to the 50S subunit in the 70S ribosome, contacting the 23S rRNA.

One of the primary rRNA binding proteins, it binds directly to 16S rRNA where it helps nucleate assembly of the platform of the 30S subunit by binding and bridging several RNA helices of the 16S rRNA. In terms of biological role, forms an intersubunit bridge (bridge B4) with the 23S rRNA of the 50S subunit in the ribosome. This chain is Small ribosomal subunit protein uS15, found in Erythrobacter litoralis (strain HTCC2594).